Reading from the N-terminus, the 311-residue chain is Cytosolic Fe-S cluster assembly factor Nubp1 homolog (311 aa).

The disordered stretch occupies residues 1 to 21 (MQAPPPEHCPGVESEDAGKGS). Residues Cys9, Cys23, Cys26, and Cys32 each coordinate [4Fe-4S] cluster. 63–70 (GKGGVGKS) contacts ATP. [4Fe-4S] cluster is bound by residues Cys240 and Cys243.

It belongs to the Mrp/NBP35 ATP-binding proteins family. NUBP1/NBP35 subfamily. As to quaternary structure, heterotetramer of 2 Nubp1 and 2 Nubp2 chains. [4Fe-4S] cluster is required as a cofactor.

The protein localises to the cytoplasm. Functionally, component of the cytosolic iron-sulfur (Fe/S) protein assembly (CIA) machinery. Required for maturation of extramitochondrial Fe-S proteins. The Nubp1-Nubp2 heterotetramer forms a Fe-S scaffold complex, mediating the de novo assembly of an Fe-S cluster and its transfer to target apoproteins. This chain is Cytosolic Fe-S cluster assembly factor Nubp1 homolog, found in Drosophila sechellia (Fruit fly).